Consider the following 88-residue polypeptide: MSSFDKTMKFNFSDDSAETNVNEVLITVYDALQEKGYNPINQIVGYLLSGDPAYIPRHRDARNLIRKLERDELIEELVKSYLEQHKEA.

This sequence belongs to the UPF0297 family.

The polypeptide is UPF0297 protein YrzL (yrzL) (Bacillus subtilis (strain 168)).